A 316-amino-acid polypeptide reads, in one-letter code: Small ribosomal subunit protein RACK1 (316 aa).

WD repeat units lie at residues 4–46 (QMTL…WRLT), 52–93 (YGVP…WDLS), 94–135 (TGQT…WNTL), 137–180 (VCKY…WNLT), 181–221 (NCKL…LWDL), 222–263 (NEGK…WDLE), and 264–312 (GKVV…WQVS).

This sequence belongs to the WD repeat G protein beta family. Ribosomal protein RACK1 subfamily.

In Biomphalaria glabrata (Bloodfluke planorb), this protein is Small ribosomal subunit protein RACK1.